The primary structure comprises 379 residues: Glutamate 5-kinase (379 aa).

An ATP-binding site is contributed by Lys-20. Substrate contacts are provided by Ser-59, Asp-146, and Asn-158. 220–226 (SGGMYSK) is a binding site for ATP. Positions 285 to 362 (TGSVVVDDGA…AELTAILGDN (78 aa)) constitute a PUA domain.

This sequence belongs to the glutamate 5-kinase family.

It is found in the cytoplasm. The enzyme catalyses L-glutamate + ATP = L-glutamyl 5-phosphate + ADP. It functions in the pathway amino-acid biosynthesis; L-proline biosynthesis; L-glutamate 5-semialdehyde from L-glutamate: step 1/2. Functionally, catalyzes the transfer of a phosphate group to glutamate to form L-glutamate 5-phosphate. This Oleidesulfovibrio alaskensis (strain ATCC BAA-1058 / DSM 17464 / G20) (Desulfovibrio alaskensis) protein is Glutamate 5-kinase.